We begin with the raw amino-acid sequence, 459 residues long: Eukaryotic translation initiation factor 3 subunit M (459 aa).

Positions leucine 207–tyrosine 384 constitute a PCI domain. Positions alanine 431 to glutamate 459 are disordered. The span at glutamate 434 to proline 452 shows a compositional bias: basic and acidic residues.

The protein belongs to the eIF-3 subunit M family. As to quaternary structure, component of the eukaryotic translation initiation factor 3 (eIF-3) complex.

It localises to the cytoplasm. In terms of biological role, component of the eukaryotic translation initiation factor 3 (eIF-3) complex, which is involved in protein synthesis of a specialized repertoire of mRNAs and, together with other initiation factors, stimulates binding of mRNA and methionyl-tRNAi to the 40S ribosome. The eIF-3 complex specifically targets and initiates translation of a subset of mRNAs involved in cell proliferation. The sequence is that of Eukaryotic translation initiation factor 3 subunit M from Emericella nidulans (strain FGSC A4 / ATCC 38163 / CBS 112.46 / NRRL 194 / M139) (Aspergillus nidulans).